The sequence spans 326 residues: N-acetyl-gamma-glutamyl-phosphate reductase (326 aa).

The active site involves Cys-155.

The protein belongs to the NAGSA dehydrogenase family. Type 1 subfamily.

The protein resides in the cytoplasm. It catalyses the reaction N-acetyl-L-glutamate 5-semialdehyde + phosphate + NADP(+) = N-acetyl-L-glutamyl 5-phosphate + NADPH + H(+). It participates in amino-acid biosynthesis; L-arginine biosynthesis; N(2)-acetyl-L-ornithine from L-glutamate: step 3/4. Catalyzes the NADPH-dependent reduction of N-acetyl-5-glutamyl phosphate to yield N-acetyl-L-glutamate 5-semialdehyde. In Shewanella denitrificans (strain OS217 / ATCC BAA-1090 / DSM 15013), this protein is N-acetyl-gamma-glutamyl-phosphate reductase.